The chain runs to 167 residues: uncharacterized protein (167 aa).

The span at 1-10 (MPLRRCRAWR) shows a compositional bias: basic residues. Positions 1–23 (MPLRRCRAWRGHSQPGTGSRSNE) are disordered.

This is an uncharacterized protein from Sinorhizobium fredii (strain NBRC 101917 / NGR234).